The primary structure comprises 595 residues: Pyranose dehydrogenase (595 aa).

A signal peptide spans 1 to 21 (MARFNARLFSIAILGFQVARS). 2 N-linked (GlcNAc...) asparagine glycosylation sites follow: asparagine 95 and asparagine 110. Position 123 is a tele-8alpha-FAD histidine (histidine 123). 5 N-linked (GlcNAc...) asparagine glycosylation sites follow: asparagine 195, asparagine 337, asparagine 367, asparagine 502, and asparagine 510. Histidine 530 serves as the catalytic Proton acceptor. N-linked (GlcNAc...) asparagine glycosylation occurs at asparagine 541. Histidine 574 is an active-site residue.

The protein belongs to the GMC oxidoreductase family. As to quaternary structure, monomer. FAD is required as a cofactor. Post-translationally, N-glycosylated.

It is found in the secreted. It catalyses the reaction pyranose + acceptor = pyranos-2-ulose + reduced acceptor.. The catalysed reaction is pyranose + acceptor = pyranos-3-ulose + reduced acceptor.. The enzyme catalyses pyranose + acceptor = pyranos-2,3-diulose + reduced acceptor.. It carries out the reaction a pyranoside + acceptor = a pyranosid-3-ulose + reduced acceptor.. It catalyses the reaction a pyranoside + acceptor = a pyranosid-3,4-diulose + reduced acceptor.. Catalyzes the single-oxidation or sequential double oxidation reaction of carbohydrates primarily at carbon-2 and/or carbon-3 with the concomitant reduction of the flavin. The enzyme exhibits a broad sugar substrate specificity, oxidizing different aldopyranoses to the corresponding C-1, C-2, C-3 or C-1,2, C-2,3 and C-3,4 (di)dehydro sugars with substrate-specific regioselectivity. Accepts only a narrow range of electron acceptors such as substituted benzoquinones and complexed metal ions and reacts extremely slowly with O(2) as acceptor. May play a role in the natural recycling of plant matter by oxidizing all major monosaccharides in lignocellulose and by reducing quinone compounds or reactive radical species generated during lignin depolymerization. This is Pyranose dehydrogenase from Agaricus campestris (Field mushroom).